Here is an 851-residue protein sequence, read N- to C-terminus: UPF0182 protein CYA_1810 (851 aa).

7 helical membrane-spanning segments follow: residues 7-27 (GLVLLLWAGLGILAITALASF), 47-67 (VLARWGLGLGAFAFALAVVGS), 76-96 (ASTAGAWAIALGLSGGLAWSL), 141-161 (FNLVLLTLITVALIYLVELGL), 168-188 (LALSLFAQRHLLILGGALFLL), 220-240 (LPATTLMSGVAFLTAVGFWAL), and 259-279 (WASSLLAPALLWGAYLGFGLL).

It belongs to the UPF0182 family.

It localises to the cell membrane. This Synechococcus sp. (strain JA-3-3Ab) (Cyanobacteria bacterium Yellowstone A-Prime) protein is UPF0182 protein CYA_1810.